The primary structure comprises 159 residues: Phosphopantetheine adenylyltransferase (159 aa).

A substrate-binding site is contributed by T10. Residues 10-11 (TF) and H18 each bind ATP. K42, L74, and R88 together coordinate substrate. ATP contacts are provided by residues 89 to 91 (GLR), E99, and 124 to 130 (FAYVSSS).

It belongs to the bacterial CoaD family. As to quaternary structure, homohexamer. Mg(2+) is required as a cofactor.

Its subcellular location is the cytoplasm. The catalysed reaction is (R)-4'-phosphopantetheine + ATP + H(+) = 3'-dephospho-CoA + diphosphate. It functions in the pathway cofactor biosynthesis; coenzyme A biosynthesis; CoA from (R)-pantothenate: step 4/5. Its function is as follows. Reversibly transfers an adenylyl group from ATP to 4'-phosphopantetheine, yielding dephospho-CoA (dPCoA) and pyrophosphate. The protein is Phosphopantetheine adenylyltransferase of Thioalkalivibrio sulfidiphilus (strain HL-EbGR7).